We begin with the raw amino-acid sequence, 409 residues long: Glucose-1-phosphate adenylyltransferase (409 aa).

Alpha-D-glucose 1-phosphate contacts are provided by residues G168, 183-184, and S201; that span reads EK.

The protein belongs to the bacterial/plant glucose-1-phosphate adenylyltransferase family. In terms of assembly, homotetramer.

It catalyses the reaction alpha-D-glucose 1-phosphate + ATP + H(+) = ADP-alpha-D-glucose + diphosphate. The protein operates within glycan biosynthesis; glycogen biosynthesis. In terms of biological role, involved in the biosynthesis of ADP-glucose, a building block required for the elongation reactions to produce glycogen. Catalyzes the reaction between ATP and alpha-D-glucose 1-phosphate (G1P) to produce pyrophosphate and ADP-Glc. This chain is Glucose-1-phosphate adenylyltransferase, found in Corynebacterium efficiens (strain DSM 44549 / YS-314 / AJ 12310 / JCM 11189 / NBRC 100395).